The following is a 400-amino-acid chain: MSERVVLAYSGGLDTSVAISWIGKETGAEVVAVAIDLGQGGEDMNVVRQRALDCGAVESIVIDARDEFAEQYCLPTIQANALYMGQYPLVSAISRPLIVKHLVEAAKFHGADTVAHGCTGKGNDQVRFEVGIGALAPDLNVIAPVRDYAWTREKAIAFAEENKLPINVTKKSPFSIDQNVWGRAVETGFLEDLWNAPTKDVYDYTADPTVNFEAPDELIITFDKGVPVAIDGRPVSVLEAIVELNHRAGRQGVGRLDMVEDRLVGIKSREIYEAPGAITLITAHQALEHVTIERELGRYKRQVEQRWGELAYDGLWFSPLKRALDAFVQDTQQHVSGDIRMVLHGGSAVVNGRRSEQSLYDFNLATYDEGDTFDQSLAKGFVQIHGLSSKVAARRDLNQK.

Residue 8–16 (AYSGGLDTS) participates in ATP binding. Tyrosine 87 is an L-citrulline binding site. An ATP-binding site is contributed by glycine 117. Threonine 119, asparagine 123, and aspartate 124 together coordinate L-aspartate. Asparagine 123 lines the L-citrulline pocket. Residues arginine 127, serine 175, glutamate 260, and tyrosine 272 each coordinate L-citrulline.

Belongs to the argininosuccinate synthase family. Type 1 subfamily. In terms of assembly, homotetramer.

Its subcellular location is the cytoplasm. The enzyme catalyses L-citrulline + L-aspartate + ATP = 2-(N(omega)-L-arginino)succinate + AMP + diphosphate + H(+). The protein operates within amino-acid biosynthesis; L-arginine biosynthesis; L-arginine from L-ornithine and carbamoyl phosphate: step 2/3. This chain is Argininosuccinate synthase, found in Nocardia farcinica (strain IFM 10152).